The primary structure comprises 429 residues: Glutamate dehydrogenase B (429 aa).

The segment at 1 to 20 (MAQTPPPESAPSTDSEPETA) is disordered. Residue lysine 119 is part of the active site.

It belongs to the Glu/Leu/Phe/Val dehydrogenases family. In terms of assembly, homohexamer.

In Halobacterium salinarum (strain ATCC 700922 / JCM 11081 / NRC-1) (Halobacterium halobium), this protein is Glutamate dehydrogenase B (gdhB).